The chain runs to 1014 residues: EMILIN-1-A (1014 aa).

The first 27 residues, 1 to 27 (MALYFVYLSTLLALILLGDNWAAGTYA), serve as a signal peptide directing secretion. The region spanning 53-128 (HRNWCAYVVT…HGYSGDDCSD (76 aa)) is the EMI domain. Disulfide bonds link C57-C118, C84-C89, and C117-C126. Disordered regions lie at residues 125 to 150 (DCSD…SDSD) and 811 to 869 (QDFT…ANVP). Basic and acidic residues predominate over residues 134 to 150 (HDSRARPTGEEGRSDSD). Residues 145 to 179 (GRSDSDRIRQLEEQIQSLNKNLHNLQKKIYEESQR) are a coiled coil. Residues 815–865 (GPPGLPGPQGEKGSKGPPGPRGPLGKEGPQGRVGPVGPPGLRGEQGPPGKD) form the Collagen-like domain. The span at 840-856 (KEGPQGRVGPVGPPGLR) shows a compositional bias: low complexity. One can recognise a C1q domain in the interval 866–1012 (ANVPRLSFSA…GMLLYEESED (147 aa)).

It is found in the secreted. The protein localises to the extracellular space. Its subcellular location is the extracellular matrix. Its function is as follows. May be responsible for anchoring smooth muscle cells to elastic fibers, and may be involved not only in the formation of the elastic fiber, but also in the processes that regulate vessel assembly. Has cell adhesive capacity. The protein is EMILIN-1-A of Danio rerio (Zebrafish).